We begin with the raw amino-acid sequence, 1111 residues long: Protein NETWORKED 1C (1111 aa).

In terms of domain architecture, NAB spans 13–93; the sequence is YSWWWDSHNT…ERYNHATGVI (81 aa). 3 coiled-coil regions span residues 202–287, 314–605, and 642–752; these read SESE…KESS, ERAS…LISE, and KTIG…LESK. The tract at residues 850–870 is disordered; the sequence is TGGGRSMRKQDGGSGRMRKQS. Residues 943–1009 adopt a coiled-coil conformation; sequence NREVNKRRVL…EGEEAIEKLF (67 aa).

Belongs to the NET family.

Its function is as follows. Plant-specific actin binding protein. May be part of a membrane-cytoskeletal adapter complex. In Arabidopsis thaliana (Mouse-ear cress), this protein is Protein NETWORKED 1C.